We begin with the raw amino-acid sequence, 656 residues long: Choline transporter-like protein 3 (656 aa).

The chain crosses the membrane as a helical span at residues 37–57 (WLVLFFLFWTGLVFIMGYSVV). Asparagine 141 and asparagine 154 each carry an N-linked (GlcNAc...) asparagine glycan. 5 helical membrane passes run 216–236 (DTILGLCVFTFALSLAMLFAF), 242–262 (LLIHIIISLVILGLLFVCGVL), 288–308 (LAFAIISTVVTVLLLALIFTL), 337–357 (LWTCAILIFFWVLWVAVLLSL), and 381–401 (YMWWYHLIGLIWTSEFILACQ). N-linked (GlcNAc...) asparagine glycosylation is found at asparagine 506 and asparagine 524. A helical membrane pass occupies residues 537–557 (FVIFLGKVLVVCFSIFGGLMA). N-linked (GlcNAc...) asparagine glycosylation is present at asparagine 559. Residues 566-586 (VWAIPLLLVAFFACVVAHSFL) form a helical membrane-spanning segment. Residues 634-656 (AKSQGQKDALPNEEGTELQPIVR) are disordered.

It belongs to the CTL (choline transporter-like) family.

It is found in the membrane. The chain is Choline transporter-like protein 3 (Slc44a3) from Mus musculus (Mouse).